The chain runs to 258 residues: Indole-3-glycerol phosphate synthase (258 aa).

Belongs to the TrpC family.

It carries out the reaction 1-(2-carboxyphenylamino)-1-deoxy-D-ribulose 5-phosphate + H(+) = (1S,2R)-1-C-(indol-3-yl)glycerol 3-phosphate + CO2 + H2O. It participates in amino-acid biosynthesis; L-tryptophan biosynthesis; L-tryptophan from chorismate: step 4/5. This Geobacillus kaustophilus (strain HTA426) protein is Indole-3-glycerol phosphate synthase.